The primary structure comprises 676 residues: DNA ligase (676 aa).

NAD(+)-binding positions include 32 to 36 (DAEYD), 81 to 82 (SL), and glutamate 113. Catalysis depends on lysine 115, which acts as the N6-AMP-lysine intermediate. Positions 136, 173, 291, and 315 each coordinate NAD(+). The Zn(2+) site is built by cysteine 409, cysteine 412, cysteine 427, and cysteine 433. Positions 595–676 (SEKTYFFNKK…LNSLIRIKEQ (82 aa)) constitute a BRCT domain.

Belongs to the NAD-dependent DNA ligase family. LigA subfamily. Mg(2+) is required as a cofactor. The cofactor is Mn(2+).

The catalysed reaction is NAD(+) + (deoxyribonucleotide)n-3'-hydroxyl + 5'-phospho-(deoxyribonucleotide)m = (deoxyribonucleotide)n+m + AMP + beta-nicotinamide D-nucleotide.. Its function is as follows. DNA ligase that catalyzes the formation of phosphodiester linkages between 5'-phosphoryl and 3'-hydroxyl groups in double-stranded DNA using NAD as a coenzyme and as the energy source for the reaction. It is essential for DNA replication and repair of damaged DNA. The chain is DNA ligase from Buchnera aphidicola subsp. Acyrthosiphon pisum (strain Tuc7).